Here is a 307-residue protein sequence, read N- to C-terminus: D-alanine--D-alanine ligase (307 aa).

The ATP-grasp domain occupies Lys101–Glu301. Residue Pro127–Thr182 participates in ATP binding. Mg(2+)-binding residues include Asp251, Glu268, and Asn270.

The protein belongs to the D-alanine--D-alanine ligase family. It depends on Mg(2+) as a cofactor. The cofactor is Mn(2+).

It localises to the cytoplasm. It catalyses the reaction 2 D-alanine + ATP = D-alanyl-D-alanine + ADP + phosphate + H(+). Its pathway is cell wall biogenesis; peptidoglycan biosynthesis. Functionally, cell wall formation. The chain is D-alanine--D-alanine ligase from Methylobacterium radiotolerans (strain ATCC 27329 / DSM 1819 / JCM 2831 / NBRC 15690 / NCIMB 10815 / 0-1).